Reading from the N-terminus, the 251-residue chain is Transcription factor bHLH144 (251 aa).

Disordered regions lie at residues 1–20, 130–161, and 173–202; these read MQNN…NMHN, YEEN…YGNT, and NNNN…RKKM. Residues 9–18 show a composition bias toward basic and acidic residues; the sequence is FSDEVGDRNM. The span at 130-147 shows a compositional bias: acidic residues; the sequence is YEENDDNEGEEDGGDSEE. A compositionally biased stretch (polar residues) spans 148–161; sequence VSTARTSSRDYGNT. Over residues 173 to 192 the composition is skewed to low complexity; that stretch reads NNNNNNNSRKQSLSGSASSS. The region spanning 186-235 is the bHLH domain; that stretch reads SGSASSSNNDGKGRKKMKKMMGVLRRIVPGGEQMNTACVLDEAVQYLKSL.

Homodimer. Interacts with LHW.

Its subcellular location is the nucleus. The polypeptide is Transcription factor bHLH144 (BHLH144) (Arabidopsis thaliana (Mouse-ear cress)).